The sequence spans 354 residues: UDP-glucose 4-epimerase GEPI42 (354 aa).

11 to 42 (TILVTGGAGFIGSHTVVQLLKQGFHVSIIDNL) is a binding site for NAD(+). Residue S137 coordinates substrate. Catalysis depends on Y161, which acts as the Proton acceptor.

It belongs to the NAD(P)-dependent epimerase/dehydratase family. NAD(+) serves as cofactor.

It carries out the reaction UDP-alpha-D-glucose = UDP-alpha-D-galactose. The protein operates within carbohydrate metabolism; galactose metabolism. This is UDP-glucose 4-epimerase GEPI42 from Cyamopsis tetragonoloba (Guar).